A 204-amino-acid polypeptide reads, in one-letter code: Large ribosomal subunit protein bL25 (204 aa).

This sequence belongs to the bacterial ribosomal protein bL25 family. CTC subfamily. As to quaternary structure, part of the 50S ribosomal subunit; part of the 5S rRNA/L5/L18/L25 subcomplex. Contacts the 5S rRNA. Binds to the 5S rRNA independently of L5 and L18.

This is one of the proteins that binds to the 5S RNA in the ribosome where it forms part of the central protuberance. The polypeptide is Large ribosomal subunit protein bL25 (Bordetella bronchiseptica (strain ATCC BAA-588 / NCTC 13252 / RB50) (Alcaligenes bronchisepticus)).